Here is a 141-residue protein sequence, read N- to C-terminus: Sporulation-specific cell division protein SsgB (141 aa).

This sequence belongs to the SsgA family. As to quaternary structure, interacts with SsgA. Interacts with FtsZ (via N-terminus).

The protein localises to the cell septum. In terms of biological role, involved in sporulation-specific cell division. Required for early stages of sporulation. Important in the process of growth cessation prior to sporulation-specific cell division. Recruits cell division protein FtsZ to the future septum sites and tethers the contractile ring structure (Z ring) to the cytoplasmic membrane during sporulation. Stimulates polymerization and filament length of FtsZ in vitro. In Saccharopolyspora erythraea (strain ATCC 11635 / DSM 40517 / JCM 4748 / NBRC 13426 / NCIMB 8594 / NRRL 2338), this protein is Sporulation-specific cell division protein SsgB.